Consider the following 824-residue polypeptide: Probable ion channel POLLUX (824 aa).

Low complexity predominate over residues 45-54 (DGDDSSNLPT). A disordered region spans residues 45 to 70 (DGDDSSNLPTVPNPEEKPVPVPSQSP). The next 4 helical transmembrane spans lie at 81 to 101 (FSLT…VMFL), 135 to 155 (AVVF…YMYL), 198 to 218 (LALL…LYAV), and 250 to 270 (IVSV…LGLI). 2 RCK N-terminal domains span residues 291–432 (SNHI…ETVV) and 550–699 (PEKI…DKSI). A coiled-coil region spans residues 325 to 346 (LAERDKEEMETDIAKFEFDLMG).

The protein belongs to the castor/pollux (TC 1.A.1.23) family.

It is found in the nucleus membrane. This chain is Probable ion channel POLLUX, found in Arabidopsis thaliana (Mouse-ear cress).